We begin with the raw amino-acid sequence, 67 residues long: Bowman-Birk type proteinase inhibitor A6 (67 aa).

Cystine bridges form between cysteine 9–cysteine 66, cysteine 10–cysteine 29, cysteine 13–cysteine 62, cysteine 16–cysteine 27, cysteine 36–cysteine 43, and cysteine 40–cysteine 54.

This sequence belongs to the Bowman-Birk serine protease inhibitor family. In terms of tissue distribution, expressed in bulb (at protein level).

Its function is as follows. Serine protease inhibitor. Strongly inhibits trypsin (Ki = 4 nM) and elastase (Ki = 4.8 nM). Also inhibits chymotrypsin with a Ki of 22 nM. Does not inhibit bacterial subtilisin. The chain is Bowman-Birk type proteinase inhibitor A6 from Hyacinthus orientalis (Common hyacinth).